We begin with the raw amino-acid sequence, 342 residues long: N-acetyl-gamma-glutamyl-phosphate reductase (342 aa).

Residue cysteine 149 is part of the active site.

This sequence belongs to the NAGSA dehydrogenase family. Type 1 subfamily.

Its subcellular location is the cytoplasm. The catalysed reaction is N-acetyl-L-glutamate 5-semialdehyde + phosphate + NADP(+) = N-acetyl-L-glutamyl 5-phosphate + NADPH + H(+). Its pathway is amino-acid biosynthesis; L-arginine biosynthesis; N(2)-acetyl-L-ornithine from L-glutamate: step 3/4. Its function is as follows. Catalyzes the NADPH-dependent reduction of N-acetyl-5-glutamyl phosphate to yield N-acetyl-L-glutamate 5-semialdehyde. The chain is N-acetyl-gamma-glutamyl-phosphate reductase from Thiobacillus denitrificans (strain ATCC 25259 / T1).